We begin with the raw amino-acid sequence, 311 residues long: tRNA dimethylallyltransferase (311 aa).

8-15 (GPTGVGKS) contacts ATP. 10–15 (TGVGKS) contacts substrate.

This sequence belongs to the IPP transferase family. In terms of assembly, monomer. The cofactor is Mg(2+).

It catalyses the reaction adenosine(37) in tRNA + dimethylallyl diphosphate = N(6)-dimethylallyladenosine(37) in tRNA + diphosphate. Its function is as follows. Catalyzes the transfer of a dimethylallyl group onto the adenine at position 37 in tRNAs that read codons beginning with uridine, leading to the formation of N6-(dimethylallyl)adenosine (i(6)A). The protein is tRNA dimethylallyltransferase of Mycobacterium leprae (strain Br4923).